Here is a 207-residue protein sequence, read N- to C-terminus: Ribonuclease HII (207 aa).

The 188-residue stretch at 20–207 (QLFAGVDEVG…KPVKRVLGIE (188 aa)) folds into the RNase H type-2 domain. A divalent metal cation contacts are provided by D26, E27, and D118.

It belongs to the RNase HII family. The cofactor is Mn(2+). Requires Mg(2+) as cofactor.

Its subcellular location is the cytoplasm. It carries out the reaction Endonucleolytic cleavage to 5'-phosphomonoester.. Endonuclease that specifically degrades the RNA of RNA-DNA hybrids. In Aliivibrio fischeri (strain MJ11) (Vibrio fischeri), this protein is Ribonuclease HII.